We begin with the raw amino-acid sequence, 453 residues long: Regulatory protein opaque-2 (453 aa).

A disordered region spans residues serine 145–arginine 243. Over residues serine 146–leucine 175 the composition is skewed to polar residues. Acidic residues predominate over residues proline 207 to valine 216. Positions proline 224–arginine 240 are enriched in basic and acidic residues. The bZIP domain occupies threonine 225–leucine 288. Residues arginine 228–lysine 251 form a basic motif region. Residues leucine 253–leucine 274 are leucine-zipper.

It belongs to the bZIP family. Interacts with the Dof zinc finger protein PBF. In terms of tissue distribution, seed endosperm.

The protein resides in the nucleus. Its function is as follows. Involved in the regulation of the endosperm-specific production of albumin b-32 and other zein proteins. It is a trans-acting transcriptional activator that binds to the consensus sequence 5'-GATGAYRTGR-3'. The sequence is that of Regulatory protein opaque-2 (O2) from Zea mays (Maize).